A 559-amino-acid polypeptide reads, in one-letter code: Potassium-transporting ATPase potassium-binding subunit (559 aa).

13 consecutive transmembrane segments (helical) span residues 5-25, 27-47, 63-83, 132-152, 170-190, 253-273, 283-303, 327-347, 356-376, 379-399, 416-436, 484-504, and 524-544; these read GFLLIASFLLILLVLAKPLGS, LARLIAAVPLPGVAGVERILW, LLALLTLNLLGLGILFCLLFW, GLTVQNFLSAATGIAVVFALI, LVRITLWILFPVALIIALFFI, LAQMLAIFLIPAALCFAFGEA, LLWAMSFIFVVCVAVVMWAEV, FGVLASSLFAVVTTAASCGAV, ALGGMVPMWLMQIGEVVFGGV, GLYGMLLFVLLAVFIAGLMIG, MTALAILVTPMLVLLGSALAM, LLAFCMFVGRFGVIIPVMAIA, and GALFIGLLIGTVLLVGALTFI.

The protein belongs to the KdpA family. As to quaternary structure, the system is composed of three essential subunits: KdpA, KdpB and KdpC.

The protein resides in the cell inner membrane. In terms of biological role, part of the high-affinity ATP-driven potassium transport (or Kdp) system, which catalyzes the hydrolysis of ATP coupled with the electrogenic transport of potassium into the cytoplasm. This subunit binds the periplasmic potassium ions and delivers the ions to the membrane domain of KdpB through an intramembrane tunnel. The chain is Potassium-transporting ATPase potassium-binding subunit from Salmonella dublin (strain CT_02021853).